A 401-amino-acid chain; its full sequence is Propionate kinase (401 aa).

The ATP site is built by asparagine 11 and lysine 18. Asparagine 11 provides a ligand contact to Mg(2+). Arginine 86 serves as a coordination point for substrate. The Proton donor/acceptor role is filled by aspartate 143. ATP contacts are provided by residues histidine 175, 203–207 (HLGNG), 278–280 (DLR), and 326–330 (GIGEN).

It belongs to the acetokinase family. TdcD subfamily. In terms of assembly, homodimer. Requires Mg(2+) as cofactor.

It carries out the reaction propanoate + ATP = propanoyl phosphate + ADP. The protein operates within amino-acid degradation; L-threonine degradation via propanoate pathway; propanoate from L-threonine: step 4/4. Its function is as follows. Catalyzes the conversion of propionyl phosphate and ADP to propionate and ATP. This is Propionate kinase from Klebsiella pneumoniae (strain 342).